The chain runs to 813 residues: MAAAAPKRRMGLEKIGLYDVGRAIGKGNFATVRIARHRIAKTKVAVKSIDVSKLDKENLIKLEREVKIVTMIDHPHIVKCYEIMRVDNMLYIVSEYCSTGELYATLMGKGRVTEDIARKWFTETAAAVSYLHNKGIVHRDLKTENILLGKDSKIKLIDFGFSNFQTPDQLLNTWCGSPPYAAPELLLGNSYDGMKADIWSMGVLLYILVTGGFPFGSESVNDLKRSVLSGVVKIPYWVSVECADFIRKMLVLNPTKRMTIQNVLAHRWMHIRNDVKKQVQNLESSIRPTPSKLNPTIMMFMQQHGKWTEEQIIDAVLGRNFESPIFATYELLADKVKIGSLEGTGEEYPRRGSRGSILSGRANVDEQPLTPTISAHQLAQLNLSSPDCDSDDSSNSDLCDESPLSSLEPNHKQFTLPRGLDLMGNRFENRRHTLCASEQLLSPNLMGQFPPPNLLLNNFTMSPLGFPPMPEGQAAEFPFPSLHPALGAFPTTDLSKMLPVPKSERRASAGETLLPTNFDLQQHLANLSANPVSFPTVEEEGRSYLAKYGGKRNTVHCLGNQIGGGVQNPIPRYQRTPYAKAPPAERRSSWASPSLSQQQQSHLEKIFKDALQTNNDISRLHKEFKNLSHGCAQSQITNEGSSLACPQISITDEYNRQHNIAPSASSFDPVSIFQKNAQEVVFGQRPATAIGFSSTSFSGMSTPEQTTRSMDDRVRSIVCTLPFAEVVEELKSSLNILKIPFAETQEMVYEPQVTEMRRLSLPSGVEIGVAVLPPEHKSHVEFAIINNDSPTSEILCDQLICRLRMIDPNWSSE.

One can recognise a Protein kinase domain in the interval 18-269 (YDVGRAIGKG…IQNVLAHRWM (252 aa)). ATP is bound by residues 24–32 (IGKGNFATV) and K47. Residue D140 is the Proton acceptor of the active site. Residues 383–412 (LSSPDCDSDDSSNSDLCDESPLSSLEPNHK) are disordered. Residues 388 to 400 (CDSDDSSNSDLCD) show a composition bias toward acidic residues.

This sequence belongs to the protein kinase superfamily. CAMK Ser/Thr protein kinase family. SNF1 subfamily. In terms of assembly, interacts with tax-6. Mg(2+) is required as a cofactor. In terms of processing, autophosphorylated. Elevated cAMP levels appears to act via PKA to directly or indirectly phosphorylate multiple sites on kin-29 and inhibit function.

Its subcellular location is the cytoplasm. The protein localises to the nucleus. The catalysed reaction is L-seryl-[protein] + ATP = O-phospho-L-seryl-[protein] + ADP + H(+). The enzyme catalyses L-threonyl-[protein] + ATP = O-phospho-L-threonyl-[protein] + ADP + H(+). Its function is as follows. Regulates chemoreceptor expression by phosphorylating the hda-4 class II histone deacetylase (HDAC) and inhibiting the gene repression functions of hda-4 and the mef-2 transcription factor, enabling the correct sensing and transduction of food signals. Role in determining body size, the dauer decision and serotonin-mediated egg laying. May modulate the Sma/Mab pathway and regulates development in the later larval stages. This chain is Serine/threonine-protein kinase kin-29, found in Caenorhabditis briggsae.